The chain runs to 130 residues: Protein ApaG (130 aa).

The region spanning 3–127 is the ApaG domain; that stretch reads RATTRKIQVT…FSLDVPHMAR (125 aa).

The sequence is that of Protein ApaG from Azorhizobium caulinodans (strain ATCC 43989 / DSM 5975 / JCM 20966 / LMG 6465 / NBRC 14845 / NCIMB 13405 / ORS 571).